Here is a 157-residue protein sequence, read N- to C-terminus: Protein Smg homolog (157 aa).

The protein belongs to the Smg family.

This is Protein Smg homolog from Shewanella woodyi (strain ATCC 51908 / MS32).